Reading from the N-terminus, the 448-residue chain is Acetate kinase (448 aa).

Asparagine 7 contributes to the Mg(2+) binding site. Lysine 14 serves as a coordination point for ATP. Substrate is bound at residue arginine 91. The Proton donor/acceptor role is filled by aspartate 148. ATP-binding positions include 208–212 and 283–285; these read HIGNG and DRR. Glutamate 388 serves as a coordination point for Mg(2+).

It belongs to the acetokinase family. As to quaternary structure, homodimer. Requires Mg(2+) as cofactor. It depends on Mn(2+) as a cofactor.

The protein resides in the cytoplasm. It catalyses the reaction acetate + ATP = acetyl phosphate + ADP. Its pathway is metabolic intermediate biosynthesis; acetyl-CoA biosynthesis; acetyl-CoA from acetate: step 1/2. Functionally, catalyzes the formation of acetyl phosphate from acetate and ATP. Can also catalyze the reverse reaction. This Treponema pallidum (strain Nichols) protein is Acetate kinase.